The sequence spans 393 residues: UDP-galactose translocator (393 aa).

10 consecutive transmembrane segments (helical) span residues 3–23 (AVGSGGSTATAGPGAVSAGAL), 37–57 (YISLAVLVVQNASLILSIRYA), 65–85 (FFATTAVVMAEVLKGLTCLLL), 97–117 (LVLFLHEAVLVQYMDTLKLAV), 140–160 (TFQVTYQLKILTTALFSVLML), 169–189 (WASLLLLFTGVAIVQAQQAGG), 200–220 (GVGLAAVVASCLSSGFAGVYF), 238–258 (LGLFGTALGLVGLWWAEGTAV), 269–289 (PAVWGVVLNQAFGGLLVAVVV), and 315–335 (LFGFHVDPLFALGAGLVIGAV). Residues 353–393 (APTSGPCTHQQPPGQPPPPQLSSHHGDLSTEPFLPKSVLVK) are disordered.

It belongs to the nucleotide-sugar transporter family. SLC35A subfamily. In terms of assembly, interacts with SLC35A3; the interaction is reduced in the presence of SLC35A4. Found in a complex with SLC35A3 and SLC35A4.

The protein resides in the golgi apparatus membrane. The enzyme catalyses UMP(out) + UDP-alpha-D-galactose(in) = UMP(in) + UDP-alpha-D-galactose(out). The catalysed reaction is UDP-N-acetyl-alpha-D-galactosamine(in) + UMP(out) = UDP-N-acetyl-alpha-D-galactosamine(out) + UMP(in). It catalyses the reaction UMP(out) + UDP-alpha-D-glucose(in) = UMP(in) + UDP-alpha-D-glucose(out). It carries out the reaction UMP(out) + UDP-N-acetyl-alpha-D-glucosamine(in) = UMP(in) + UDP-N-acetyl-alpha-D-glucosamine(out). The enzyme catalyses UDP-alpha-D-galactose(in) + AMP(out) = UDP-alpha-D-galactose(out) + AMP(in). The catalysed reaction is UDP-alpha-D-galactose(in) + CMP(out) = UDP-alpha-D-galactose(out) + CMP(in). It catalyses the reaction UDP-N-acetyl-alpha-D-galactosamine(out) + UDP-alpha-D-galactose(in) = UDP-N-acetyl-alpha-D-galactosamine(in) + UDP-alpha-D-galactose(out). It carries out the reaction UDP-N-acetyl-alpha-D-glucosamine(out) + UDP-alpha-D-galactose(in) = UDP-N-acetyl-alpha-D-glucosamine(in) + UDP-alpha-D-galactose(out). The enzyme catalyses UDP-alpha-D-galactose(in) + UDP-alpha-D-glucose(out) = UDP-alpha-D-galactose(out) + UDP-alpha-D-glucose(in). The catalysed reaction is UMP(out) + CMP(in) = UMP(in) + CMP(out). It catalyses the reaction UMP(out) + AMP(in) = UMP(in) + AMP(out). Transports uridine diphosphate galactose (UDP-galactose) from the cytosol into the Golgi apparatus, functioning as an antiporter that exchanges UDP-galactose for UMP. It is also able to exchange UDP-galactose for AMP and CMP, and to transport UDP-N-acetylgalactosamine (UDP-GalNAc) and other nucleotide sugars. As a provider of UDP-galactose to galactosyltransferases present in the Golgi apparatus, it is necessary for globotriaosylceramide/globoside (Gb3Cer) synthesis from lactosylceramide. The polypeptide is UDP-galactose translocator (Bos taurus (Bovine)).